The chain runs to 105 residues: Blood plasma apolipoprotein LAL1 (105 aa).

A signal peptide spans 1–21 (MKLHVAALATLAVVCILAAGS). A propeptide spanning residues 22 to 29 (EAAPKAMS) is cleaved from the precursor.

In terms of tissue distribution, plasma.

Its subcellular location is the secreted. The chain is Blood plasma apolipoprotein LAL1 from Petromyzon marinus (Sea lamprey).